Here is a 1097-residue protein sequence, read N- to C-terminus: Platelet-derived growth factor receptor beta (1097 aa).

The first 31 residues, 1 to 31, serve as a signal peptide directing secretion; it reads MGLPEVMPASVLRGQLLLFVLLLLGPQISQG. Ig-like C2-type domains follow at residues 32–119, 128–209, and 213–308; these read LVIT…YIFV, PMDS…YSLQ, and INVS…INVT. Over 32 to 531 the chain is Extracellular; that stretch reads LVITPPGPEF…VVPHSLPFKV (500 aa). Residues N44, N88, and N102 are each glycosylated (N-linked (GlcNAc...) asparagine). A disulfide bridge connects residues C53 and C99. C148 and C189 are joined by a disulfide. N214 is a glycosylation site (N-linked (GlcNAc...) asparagine). A disulfide bridge connects residues C234 and C290. 7 N-linked (GlcNAc...) asparagine glycosylation sites follow: N291, N306, N353, N370, N444, N467, and N478. Residues 415-523 enclose the Ig-like C2-type 4 domain; that stretch reads PVRVLELSES…GRDSQEVTVV (109 aa). A disulfide bridge links C435 with C507. Residues 532–552 form a helical membrane-spanning segment; that stretch reads VVISAILALVVLTVISLIILI. Over 553-1097 the chain is Cytoplasmic; that stretch reads MLWQRKPRYE…PLAEAEDSFL (545 aa). Residues Y561, Y578, and Y580 each carry the phosphotyrosine; by autocatalysis modification. The 363-residue stretch at 599-961 folds into the Protein kinase domain; that stretch reads LVLGRTLGSG…QLVLLLERLL (363 aa). Residues 605–613 and K633 each bind ATP; that span reads LGSGAFGQV. The residue at position 685 (Y685) is a Phosphotyrosine; by ABL1 and ABL2. A phosphotyrosine; by autocatalysis mark is found at Y715, Y739, Y750, Y762, Y770, Y774, and Y777. D825 acts as the Proton acceptor in catalysis. Position 856 is a phosphotyrosine; by autocatalysis (Y856). Y933 and Y969 each carry phosphotyrosine; by ABL1 and ABL2. Residues Y1008 and Y1020 each carry the phosphotyrosine; by autocatalysis modification. The tract at residues 1016-1097 is disordered; that stretch reads TDNDYIIPLP…PLAEAEDSFL (82 aa). Residues 1042 to 1059 show a composition bias toward polar residues; sequence SLASSTLNEVNTSSTISC. A compositionally biased stretch (low complexity) spans 1072–1081; it reads EPEAQLEQPQ.

This sequence belongs to the protein kinase superfamily. Tyr protein kinase family. CSF-1/PDGF receptor subfamily. In terms of assembly, interacts with homodimeric PDGFB and PDGFD, and with heterodimers formed by PDGFA and PDGFB. May also interact with homodimeric PDGFC. Monomer in the absence of bound ligand. Interaction with homodimeric PDGFB, heterodimers formed by PDGFA and PDGFB or homodimeric PDGFD, leads to receptor dimerization, where both PDGFRA homodimers and heterodimers with PDGFRB are observed. Interacts with SH2B2/APS. Interacts directly (tyrosine phosphorylated) with SHB. Interacts (tyrosine phosphorylated) with PIK3R1 and RASA1. Interacts (tyrosine phosphorylated) with CBL. Interacts (tyrosine phosphorylated) with SRC and SRC family kinases. Interacts (tyrosine phosphorylated) with PIK3C2B, maybe indirectly. Interacts (tyrosine phosphorylated) with SHC1, GRB7, GRB10 and NCK1. Interaction with GRB2 is mediated by SHC1. Interacts (via C-terminus) with NHERF1. N-glycosylated. Post-translationally, ubiquitinated. After autophosphorylation, the receptor is polyubiquitinated, leading to its degradation. In terms of processing, autophosphorylated on tyrosine residues upon ligand binding. Autophosphorylation occurs in trans, i.e. one subunit of the dimeric receptor phosphorylates tyrosine residues on the other subunit. Phosphorylation at Tyr-578, and to a lesser degree, Tyr-580 is important for interaction with SRC. Phosphorylation at Tyr-715 is important for interaction with GRB2. Phosphorylation at Tyr-739 and Tyr-750 is important for interaction with PIK3R1. Phosphorylation at Tyr-750 is important for interaction with NCK1. Phosphorylation at Tyr-770 and Tyr-856 is important for interaction with RASA1/GAP. Phosphorylation at Tyr-856 is important for efficient phosphorylation of PLCG1 and PTPN11, resulting in increased phosphorylation of AKT1, MAPK1/ERK2 and/or MAPK3/ERK1, PDCD6IP/ALIX and STAM, and in increased cell proliferation. Phosphorylation at Tyr-1008 is important for interaction with PTPN11. Phosphorylation at Tyr-1008 and Tyr-1020 is important for interaction with PLCG1. Dephosphorylated by PTPRJ at Tyr-750, Tyr-856, Tyr-1008 and Tyr-1020. Dephosphorylated by PTPN2 at Tyr-578 and Tyr-1020.

Its subcellular location is the cell membrane. The protein localises to the cytoplasmic vesicle. The protein resides in the lysosome lumen. It catalyses the reaction L-tyrosyl-[protein] + ATP = O-phospho-L-tyrosyl-[protein] + ADP + H(+). With respect to regulation, present in an inactive conformation in the absence of bound ligand. Binding of PDGFB and/or PDGFD leads to dimerization and activation by autophosphorylation on tyrosine residues. Its function is as follows. Tyrosine-protein kinase that acts as a cell-surface receptor for homodimeric PDGFB and PDGFD and for heterodimers formed by PDGFA and PDGFB, and plays an essential role in the regulation of embryonic development, cell proliferation, survival, differentiation, chemotaxis and migration. Plays an essential role in blood vessel development by promoting proliferation, migration and recruitment of pericytes and smooth muscle cells to endothelial cells. Plays a role in the migration of vascular smooth muscle cells and the formation of neointima at vascular injury sites. Required for normal development of the cardiovascular system. Required for normal recruitment of pericytes (mesangial cells) in the kidney glomerulus, and for normal formation of a branched network of capillaries in kidney glomeruli. Promotes rearrangement of the actin cytoskeleton and the formation of membrane ruffles. Binding of its cognate ligands - homodimeric PDGFB, heterodimers formed by PDGFA and PDGFB or homodimeric PDGFD -leads to the activation of several signaling cascades; the response depends on the nature of the bound ligand and is modulated by the formation of heterodimers between PDGFRA and PDGFRB. Phosphorylates PLCG1, PIK3R1, PTPN11, RASA1/GAP, CBL, SHC1 and NCK1. Activation of PLCG1 leads to the production of the cellular signaling molecules diacylglycerol and inositol 1,4,5-trisphosphate, mobilization of cytosolic Ca(2+) and the activation of protein kinase C. Phosphorylation of PIK3R1, the regulatory subunit of phosphatidylinositol 3-kinase, leads to the activation of the AKT1 signaling pathway. Phosphorylation of SHC1, or of the C-terminus of PTPN11, creates a binding site for GRB2, resulting in the activation of HRAS, RAF1 and down-stream MAP kinases, including MAPK1/ERK2 and/or MAPK3/ERK1. Promotes phosphorylation and activation of SRC family kinases. Promotes phosphorylation of PDCD6IP/ALIX and STAM. Receptor signaling is down-regulated by protein phosphatases that dephosphorylate the receptor and its down-stream effectors, and by rapid internalization of the activated receptor. In Rattus norvegicus (Rat), this protein is Platelet-derived growth factor receptor beta (Pdgfrb).